Here is a 300-residue protein sequence, read N- to C-terminus: Haloalkane dehalogenase (300 aa).

The 124-residue stretch at 32 to 155 folds into the AB hydrolase-1 domain; sequence AIVFQHGNPT…PAVRGVFQGF (124 aa). Residue D109 is the Nucleophile of the active site. The active-site Proton donor is the E133. Catalysis depends on H273, which acts as the Proton acceptor.

This sequence belongs to the haloalkane dehalogenase family. Type 2 subfamily. In terms of assembly, monomer.

The enzyme catalyses 1-haloalkane + H2O = a halide anion + a primary alcohol + H(+). Catalyzes hydrolytic cleavage of carbon-halogen bonds in halogenated aliphatic compounds, leading to the formation of the corresponding primary alcohols, halide ions and protons. The chain is Haloalkane dehalogenase from Mycobacterium bovis (strain ATCC BAA-935 / AF2122/97).